Reading from the N-terminus, the 104-residue chain is Large ribosomal subunit protein uL23 (104 aa).

It belongs to the universal ribosomal protein uL23 family. As to quaternary structure, part of the 50S ribosomal subunit. Contacts protein L29, and trigger factor when it is bound to the ribosome.

One of the early assembly proteins it binds 23S rRNA. One of the proteins that surrounds the polypeptide exit tunnel on the outside of the ribosome. Forms the main docking site for trigger factor binding to the ribosome. In Leptospira borgpetersenii serovar Hardjo-bovis (strain JB197), this protein is Large ribosomal subunit protein uL23.